The sequence spans 337 residues: Protein-methionine-sulfoxide reductase catalytic subunit MsrP (337 aa).

A signal peptide (tat-type signal) is located at residues 1–48 (MLIKIPSRSDCSESEVTSETLYLSRRRLLGASFAGLALASGLPRLGFA). Mo-molybdopterin is bound by residues asparagine 94, 97–98 (YE), cysteine 152, threonine 187, asparagine 237, arginine 242, and 253–255 (SIK).

The protein belongs to the MsrP family. In terms of assembly, heterodimer of a catalytic subunit (MsrP) and a heme-binding subunit (MsrQ). Mo-molybdopterin is required as a cofactor. In terms of processing, predicted to be exported by the Tat system. The position of the signal peptide cleavage has not been experimentally proven.

The protein resides in the periplasm. The enzyme catalyses L-methionyl-[protein] + a quinone + H2O = L-methionyl-(S)-S-oxide-[protein] + a quinol. It catalyses the reaction L-methionyl-[protein] + a quinone + H2O = L-methionyl-(R)-S-oxide-[protein] + a quinol. Functionally, part of the MsrPQ system that repairs oxidized periplasmic proteins containing methionine sulfoxide residues (Met-O), using respiratory chain electrons. Thus protects these proteins from oxidative-stress damage caused by reactive species of oxygen and chlorine generated by the host defense mechanisms. MsrPQ is essential for the maintenance of envelope integrity under bleach stress, rescuing a wide series of structurally unrelated periplasmic proteins from methionine oxidation. The catalytic subunit MsrP is non-stereospecific, being able to reduce both (R-) and (S-) diastereoisomers of methionine sulfoxide. The chain is Protein-methionine-sulfoxide reductase catalytic subunit MsrP from Pseudomonas aeruginosa (strain ATCC 15692 / DSM 22644 / CIP 104116 / JCM 14847 / LMG 12228 / 1C / PRS 101 / PAO1).